The sequence spans 677 residues: Mitochondrial disaggregase (677 aa).

Residues 1–28 (MLGSLVSKRTAPAPRLLLQLLRSPSLRS) constitute a mitochondrion transit peptide. The tract at residues 92–126 (PSPEDTLPGQDSWNGVLSRAGLGVWALATALVVHC) is autoinhibitory. ANK repeat units follow at residues 133–162 (SKDA…DVNA), 166–195 (LGWT…DPNL), 235–265 (KGCT…PLQR), and 268–297 (MGHT…EKQR). ATP contacts are provided by His-316, Ile-318, Ser-353, Gly-354, Ile-355, Gly-356, Lys-357, Thr-358, Glu-425, and Asn-466. Residues 477–505 (LQLRQEALEMSRNRIAENLGDVQISDKIT) form a regulatory; slows ATPase and disaggregase activities region. Arg-531 contacts ATP. Lys-559 is modified (N6-acetyllysine). Residue Arg-590 participates in ATP binding.

It belongs to the ClpA/ClpB family. Homododecamer when substrate-bound; the homododecamer consists of 2 homohexamers stacked head-to-head via ANK repeat-mediated interactions. The active substrate-bound form is likely to exist in a dynamic equilibrium between homohexamers and homododecamers. Homotetradecamer in the unbound state which is remodeled upon substrate binding into the homododecamer. Interacts with PHB and PHB2. Interacts with MAVS; the interaction is enhanced by Sendai virus infection. In terms of processing, proteolytically cleaved by protease PARL. ATP-dependent protein disaggregase activity is stimulated by PARL-mediated cleavage of the N-terminal autoinhibitory peptide.

It is found in the mitochondrion intermembrane space. It catalyses the reaction ATP + H2O = ADP + phosphate + H(+). With respect to regulation, disaggregase activity is inhibited by ADP. In terms of biological role, functions as a regulatory ATPase and participates in secretion/protein trafficking process. Has ATP-dependent protein disaggregase activity and is required to maintain the solubility of key mitochondrial proteins. Involved in mitochondrial-mediated antiviral innate immunity, activates RIG-I-mediated signal transduction and production of IFNB1 and pro-inflammatory cytokine IL6. Plays a role in granulocyte differentiation. The protein is Mitochondrial disaggregase of Bos taurus (Bovine).